The primary structure comprises 188 residues: Elongation factor P (188 aa).

K34 bears the N6-(3,6-diaminohexanoyl)-5-hydroxylysine mark.

It belongs to the elongation factor P family. May be beta-lysylated on the epsilon-amino group of Lys-34 by the combined action of EpmA and EpmB, and then hydroxylated on the C5 position of the same residue by EpmC (if this protein is present). Lysylation is critical for the stimulatory effect of EF-P on peptide-bond formation. The lysylation moiety may extend toward the peptidyltransferase center and stabilize the terminal 3-CCA end of the tRNA. Hydroxylation of the C5 position on Lys-34 may allow additional potential stabilizing hydrogen-bond interactions with the P-tRNA.

It localises to the cytoplasm. Its pathway is protein biosynthesis; polypeptide chain elongation. Involved in peptide bond synthesis. Alleviates ribosome stalling that occurs when 3 or more consecutive Pro residues or the sequence PPG is present in a protein, possibly by augmenting the peptidyl transferase activity of the ribosome. Modification of Lys-34 is required for alleviation. This is Elongation factor P from Pectobacterium atrosepticum (strain SCRI 1043 / ATCC BAA-672) (Erwinia carotovora subsp. atroseptica).